The sequence spans 201 residues: Large ribosomal subunit protein uL4 (201 aa).

A disordered region spans residues 43-73 (SRGQKTRAEVTGSGKKPWRQKGTGRARSGSV).

It belongs to the universal ribosomal protein uL4 family. Part of the 50S ribosomal subunit.

In terms of biological role, one of the primary rRNA binding proteins, this protein initially binds near the 5'-end of the 23S rRNA. It is important during the early stages of 50S assembly. It makes multiple contacts with different domains of the 23S rRNA in the assembled 50S subunit and ribosome. Forms part of the polypeptide exit tunnel. The protein is Large ribosomal subunit protein uL4 of Sodalis glossinidius (strain morsitans).